The chain runs to 176 residues: Conidiation-specific protein 8 (176 aa).

Disordered stretches follow at residues 1–66 (MDDT…SKLI) and 79–162 (AASE…PQGF). A compositionally biased stretch (low complexity) spans 79–99 (AASEAFRSERSASTSSTTSET).

The chain is Conidiation-specific protein 8 (con-8) from Neurospora crassa (strain ATCC 24698 / 74-OR23-1A / CBS 708.71 / DSM 1257 / FGSC 987).